Consider the following 342-residue polypeptide: Dihydroorotate dehydrogenase (quinone) (342 aa).

FMN is bound by residues 60–64 and Thr-84; that span reads AGLDK. Lys-64 contributes to the substrate binding site. 109–113 contacts substrate; sequence NRMGF. FMN-binding residues include Asn-137 and Asn-170. Asn-170 lines the substrate pocket. Catalysis depends on Ser-173, which acts as the Nucleophile. A substrate-binding site is contributed by Asn-175. The FMN site is built by Lys-215 and Thr-243. Position 244–245 (244–245) interacts with substrate; the sequence is NT. Residues Gly-266, Gly-295, and 316–317 each bind FMN; that span reads YS.

This sequence belongs to the dihydroorotate dehydrogenase family. Type 2 subfamily. In terms of assembly, monomer. It depends on FMN as a cofactor.

The protein resides in the cell membrane. The catalysed reaction is (S)-dihydroorotate + a quinone = orotate + a quinol. The protein operates within pyrimidine metabolism; UMP biosynthesis via de novo pathway; orotate from (S)-dihydroorotate (quinone route): step 1/1. In terms of biological role, catalyzes the conversion of dihydroorotate to orotate with quinone as electron acceptor. This Nitrosomonas eutropha (strain DSM 101675 / C91 / Nm57) protein is Dihydroorotate dehydrogenase (quinone).